Here is a 63-residue protein sequence, read N- to C-terminus: Large ribosomal subunit protein bL28 (63 aa).

Belongs to the bacterial ribosomal protein bL28 family.

The polypeptide is Large ribosomal subunit protein bL28 (Clostridium botulinum (strain Alaska E43 / Type E3)).